Here is a 204-residue protein sequence, read N- to C-terminus: Small ribosomal subunit protein uS4 (204 aa).

The disordered stretch occupies residues 22–43 (SGKELARRPYAPGDHGNTGRRP). In terms of domain architecture, S4 RNA-binding spans 94–154 (TRLDSVVFRL…ERSKKIVPIL (61 aa)).

This sequence belongs to the universal ribosomal protein uS4 family. Part of the 30S ribosomal subunit. Contacts protein S5. The interaction surface between S4 and S5 is involved in control of translational fidelity.

In terms of biological role, one of the primary rRNA binding proteins, it binds directly to 16S rRNA where it nucleates assembly of the body of the 30S subunit. With S5 and S12 plays an important role in translational accuracy. This is Small ribosomal subunit protein uS4 from Oenococcus oeni (strain ATCC BAA-331 / PSU-1).